We begin with the raw amino-acid sequence, 388 residues long: Na(+)/H(+) antiporter NhaA (388 aa).

The next 11 helical transmembrane spans lie at 14–34, 59–79, 95–115, 125–145, 154–174, 179–199, 219–239, 254–274, 292–312, 328–348, and 356–376; these read GGII…MGAT, MLLW…GLEV, VFPV…YLAF, GWAI…ALLG, IFLM…IALF, LSIV…LLNL, VLKS…FIPL, ILHP…NAGV, IIAG…WLAL, IMAV…IASL, and ALIN…AVVG.

Belongs to the NhaA Na(+)/H(+) (TC 2.A.33) antiporter family.

It localises to the cell inner membrane. The catalysed reaction is Na(+)(in) + 2 H(+)(out) = Na(+)(out) + 2 H(+)(in). Its function is as follows. Na(+)/H(+) antiporter that extrudes sodium in exchange for external protons. The sequence is that of Na(+)/H(+) antiporter NhaA from Salmonella arizonae (strain ATCC BAA-731 / CDC346-86 / RSK2980).